Consider the following 309-residue polypeptide: ATP synthase gamma chain (309 aa).

Belongs to the ATPase gamma chain family. As to quaternary structure, F-type ATPases have 2 components, CF(1) - the catalytic core - and CF(0) - the membrane proton channel. CF(1) has five subunits: alpha(3), beta(3), gamma(1), delta(1), epsilon(1). CF(0) has three main subunits: a, b and c.

It is found in the cell membrane. Produces ATP from ADP in the presence of a proton gradient across the membrane. The gamma chain is believed to be important in regulating ATPase activity and the flow of protons through the CF(0) complex. This Mycolicibacterium gilvum (strain PYR-GCK) (Mycobacterium gilvum (strain PYR-GCK)) protein is ATP synthase gamma chain.